We begin with the raw amino-acid sequence, 542 residues long: Protein lin-9 homolog (542 aa).

Alanine 2 carries the post-translational modification N-acetylalanine. A sufficient for interaction with RB1 region spans residues 2-296 (AELDQLPDES…QKQRPSRFFM (295 aa)). Residue lysine 21 forms a Glycyl lysine isopeptide (Lys-Gly) (interchain with G-Cter in SUMO2) linkage. Phosphoserine is present on residues serine 65 and serine 95. Threonine 96 and threonine 304 each carry phosphothreonine. A phosphoserine mark is found at serine 309 and serine 321. Residues 355–413 (IKKEHIKKLREMNTDAEKLKSYSMPISIEFQRRYATIVLELEQLNKDLNKVLHKVQQYC) are a coiled coil.

This sequence belongs to the lin-9 family. As to quaternary structure, component of the DREAM complex (also named LINC complex) at least composed of E2F4, E2F5, LIN9, LIN37, LIN52, LIN54, MYBL1, MYBL2, RBL1, RBL2, RBBP4, TFDP1 and TFDP2. The complex exists in quiescent cells where it represses cell cycle-dependent genes. It dissociates in S phase when LIN9, LIN37, LIN52 and LIN54 form a subcomplex that binds to MYBL2. Interacts with RB1.

The protein resides in the nucleus. The protein localises to the nucleoplasm. Functionally, acts as a tumor suppressor. Inhibits DNA synthesis. Its ability to inhibit oncogenic transformation is mediated through its association with RB1. Plays a role in the expression of genes required for the G1/S transition. The sequence is that of Protein lin-9 homolog (LIN9) from Macaca fascicularis (Crab-eating macaque).